The chain runs to 497 residues: Glycerol kinase (497 aa).

Thr13 is an ADP binding site. The ATP site is built by Thr13, Thr14, and Ser15. Position 13 (Thr13) interacts with sn-glycerol 3-phosphate. Position 17 (Arg17) interacts with ADP. Arg83, Glu84, and Tyr135 together coordinate sn-glycerol 3-phosphate. Glycerol is bound by residues Arg83, Glu84, and Tyr135. The residue at position 231 (His231) is a Phosphohistidine; by HPr. Asp245 is a binding site for sn-glycerol 3-phosphate. Glycerol is bound by residues Asp245 and Gln246. Positions 267 and 310 each coordinate ADP. Residues Thr267, Gly310, Gln314, and Gly411 each contribute to the ATP site. Positions 411 and 415 each coordinate ADP.

It belongs to the FGGY kinase family. In terms of assembly, homotetramer and homodimer (in equilibrium). In terms of processing, the phosphoenolpyruvate-dependent sugar phosphotransferase system (PTS), including enzyme I, and histidine-containing protein (HPr) are required for the phosphorylation, which leads to the activation of the enzyme.

The enzyme catalyses glycerol + ATP = sn-glycerol 3-phosphate + ADP + H(+). It functions in the pathway polyol metabolism; glycerol degradation via glycerol kinase pathway; sn-glycerol 3-phosphate from glycerol: step 1/1. Its activity is regulated as follows. Activated by phosphorylation and inhibited by fructose 1,6-bisphosphate (FBP). Its function is as follows. Key enzyme in the regulation of glycerol uptake and metabolism. Catalyzes the phosphorylation of glycerol to yield sn-glycerol 3-phosphate. The polypeptide is Glycerol kinase (Listeria innocua serovar 6a (strain ATCC BAA-680 / CLIP 11262)).